We begin with the raw amino-acid sequence, 91 residues long: UPF0358 protein Sca_0738 (91 aa).

Belongs to the UPF0358 family.

In Staphylococcus carnosus (strain TM300), this protein is UPF0358 protein Sca_0738.